The following is a 730-amino-acid chain: Dynein axonemal intermediate chain 7 (730 aa).

Basic residues predominate over residues 1-14; sequence MAPKSKKAPSKKKM. Residues 1 to 20 form a disordered region; it reads MAPKSKKAPSKKKMTKAERL.

This sequence belongs to the DNAI7 family. As to quaternary structure, part of the multisubunit axonemal dynein complex formed at least of two heavy chains and a number of intermediate and light chains. Interacts with tubulin. Associates with microtubule. Ubiquitinated. Ubiquitination leads to its degradation through the 26S proteasome. Ubiquitin-proteasome-mediated DNAI7 degradation occurs in mitosis. In terms of tissue distribution, high expressed in lung, kidney, and testis.

It localises to the cell projection. The protein resides in the cilium. Its subcellular location is the cytoplasm. Its function is as follows. Via its association with the multisubunit axonemal dynein complex, is potentially involved in the regulation of cilia function. May also act as a cell cycle regulator. The polypeptide is Dynein axonemal intermediate chain 7 (Dnai7) (Mus musculus (Mouse)).